We begin with the raw amino-acid sequence, 411 residues long: Pyruvate dehydrogenase E1 component subunit alpha, mitochondrial (411 aa).

Residues 1–29 (MFSRAVRLSRAALPIRVASQRVPIAARRS) constitute a mitochondrion transit peptide. Residues His-111, Tyr-137, Arg-138, Gly-184, Val-186, Asp-215, Gly-216, Ala-217, Asn-244, and Tyr-246 each coordinate pyruvate. 8 residues coordinate thiamine diphosphate: Tyr-137, Arg-138, Gly-184, Val-186, Asp-215, Gly-216, Ala-217, and Asn-244. Position 215 (Asp-215) interacts with Mg(2+). Asn-244 and Tyr-246 together coordinate Mg(2+). His-311 is a thiamine diphosphate binding site.

Eukaryotic pyruvate dehydrogenase (PDH) complexes are organized as a core consisting of the oligomeric dihydrolipoamide acetyl-transferase (E2), around which are arranged multiple copies of pyruvate dehydrogenase (E1), dihydrolipoamide dehydrogenase (E3) and protein X (E3BP) bound by non-covalent bonds. The Chaetomium thermophilum PDH complex contains 60 E2 units, 12 E3BP units, about 20 E1 units, and 12 or more E3 units. The units are organized in 1 E2 60-mer, 4 E3BP trimers, about 20 E1 tetramers, and a maximum of 12 E3 dimers. Pyruvate dehydrogenase (E1) is active as a tetramer of 2 alpha and 2 beta subunits. The E3BP trimers are bound inside the icosahedral core with tetrahedral symmetry. Thiamine diphosphate is required as a cofactor. Mg(2+) serves as cofactor.

The protein localises to the mitochondrion. The catalysed reaction is N(6)-[(R)-lipoyl]-L-lysyl-[protein] + pyruvate + H(+) = N(6)-[(R)-S(8)-acetyldihydrolipoyl]-L-lysyl-[protein] + CO2. Its function is as follows. The 10-megadalton pyruvate dehydrogenase complex contains multiple copies of three enzymatic components: pyruvate dehydrogenase (E1), dihydrolipoamide acetyltransferase (E2) and lipoamide dehydrogenase (E3) and catalyzes the overall oxidative decarboxylation of pyruvate to form acetyl-CoA and CO(2). Within the complex, pyruvate and thiamine pyrophosphate (TPP or vitamin B1) are bound by pyruvate dehydrogenase E1 subunits alpha and beta and pyruvate is decarboxylated leading to the 2-carbon hydrohyethyl bound to TPP. The E2 component contains covalently-bound lipoyl cofactors and transfers the hydroxyethyl group from TPP to an oxidized form of covalently bound lipoamide, and the resulting acetyl group is then transferred to free coenzyme A to form acetyl-CoA and reduced dihydrolipoamide-E2. Finally, the flavoprotein dihydrolipoamide dehydrogenase (E3) re-oxidizes the lipoyl group of dihydrolipoamide-E2 to form lipoamide-E2 and NADH. A fourth subunit, E3BP, is responsible for tethering E3 in proximity to the core, forming the entire metabolon. In Chaetomium thermophilum (strain DSM 1495 / CBS 144.50 / IMI 039719) (Thermochaetoides thermophila), this protein is Pyruvate dehydrogenase E1 component subunit alpha, mitochondrial.